We begin with the raw amino-acid sequence, 86 residues long: Large ribosomal subunit protein bL27 (86 aa).

The disordered stretch occupies residues 1-24 (MATKKAGGSSRNGRDSAGRRLGVK).

The protein belongs to the bacterial ribosomal protein bL27 family.

The chain is Large ribosomal subunit protein bL27 from Rickettsia felis (strain ATCC VR-1525 / URRWXCal2) (Rickettsia azadi).